The following is a 573-amino-acid chain: Proline--tRNA ligase (573 aa).

The protein belongs to the class-II aminoacyl-tRNA synthetase family. ProS type 1 subfamily. As to quaternary structure, homodimer.

The protein resides in the cytoplasm. It carries out the reaction tRNA(Pro) + L-proline + ATP = L-prolyl-tRNA(Pro) + AMP + diphosphate. Catalyzes the attachment of proline to tRNA(Pro) in a two-step reaction: proline is first activated by ATP to form Pro-AMP and then transferred to the acceptor end of tRNA(Pro). As ProRS can inadvertently accommodate and process non-cognate amino acids such as alanine and cysteine, to avoid such errors it has two additional distinct editing activities against alanine. One activity is designated as 'pretransfer' editing and involves the tRNA(Pro)-independent hydrolysis of activated Ala-AMP. The other activity is designated 'posttransfer' editing and involves deacylation of mischarged Ala-tRNA(Pro). The misacylated Cys-tRNA(Pro) is not edited by ProRS. The polypeptide is Proline--tRNA ligase (Geobacter sp. (strain M21)).